Consider the following 150-residue polypeptide: MTTRNLTDEQIAEFREAFSLFDRDQDGNITSNELGVVMRSLGQSPTAAELQDMINEVDADGNGTIDFTEFLTMMARKMKDTDNEEEVREAFKVFDKDGNGYITVEELTHVLTSLGERLSQEEVADMIREADTDGDGVINYEEFSRVISSK.

4 consecutive EF-hand domains span residues 9–44 (EQIA…LGQS), 45–80 (PTAA…KMKD), 82–117 (DNEE…LGER), and 118–150 (LSQE…ISSK). Ca(2+) is bound by residues aspartate 22, aspartate 24, aspartate 26, asparagine 28, glutamate 33, aspartate 58, aspartate 60, asparagine 62, threonine 64, glutamate 69, aspartate 95, aspartate 97, asparagine 99, tyrosine 101, glutamate 106, aspartate 131, aspartate 133, aspartate 135, and glutamate 142.

This sequence belongs to the calmodulin family. In terms of assembly, interacts with rng2.

It localises to the cytoplasm. Its subcellular location is the cytoskeleton. The protein resides in the microtubule organizing center. The protein localises to the spindle pole body. Its function is as follows. Calmodulin mediates the control of a large number of enzymes, ion channels and other proteins by Ca(2+). Among the enzymes to be stimulated by the calmodulin-Ca(2+) complex are a number of protein kinases and phosphatases. The protein is Calmodulin (cam1) of Schizosaccharomyces pombe (strain 972 / ATCC 24843) (Fission yeast).